We begin with the raw amino-acid sequence, 34 residues long: Brevinin-2Rf (34 aa).

Cys-28 and Cys-34 form a disulfide bridge.

Expressed by the skin glands.

The protein localises to the secreted. In terms of biological role, antimicrobial peptide. This is Brevinin-2Rf from Pelophylax ridibundus (Marsh frog).